We begin with the raw amino-acid sequence, 145 residues long: D-aminoacyl-tRNA deacylase (145 aa).

The short motif at 137-138 (GP) is the Gly-cisPro motif, important for rejection of L-amino acids element.

It belongs to the DTD family. As to quaternary structure, homodimer.

The protein resides in the cytoplasm. It catalyses the reaction glycyl-tRNA(Ala) + H2O = tRNA(Ala) + glycine + H(+). The catalysed reaction is a D-aminoacyl-tRNA + H2O = a tRNA + a D-alpha-amino acid + H(+). In terms of biological role, an aminoacyl-tRNA editing enzyme that deacylates mischarged D-aminoacyl-tRNAs. Also deacylates mischarged glycyl-tRNA(Ala), protecting cells against glycine mischarging by AlaRS. Acts via tRNA-based rather than protein-based catalysis; rejects L-amino acids rather than detecting D-amino acids in the active site. By recycling D-aminoacyl-tRNA to D-amino acids and free tRNA molecules, this enzyme counteracts the toxicity associated with the formation of D-aminoacyl-tRNA entities in vivo and helps enforce protein L-homochirality. This is D-aminoacyl-tRNA deacylase from Methylacidiphilum infernorum (isolate V4) (Methylokorus infernorum (strain V4)).